Reading from the N-terminus, the 189-residue chain is Putative biopolymer transport protein ExbB-like 1 (189 aa).

3 helical membrane passes run 14–34 (FVTTLVLVWISLYLVMTLWVF), 99–119 (LVVLSIISSTAPFIGLFGTVV), and 147–167 (LIATAAGILAAIPAYSFYLIL).

This sequence belongs to the ExbB/TolQ family.

It is found in the cell inner membrane. The protein is Putative biopolymer transport protein ExbB-like 1 of Helicobacter pylori (strain ATCC 700392 / 26695) (Campylobacter pylori).